We begin with the raw amino-acid sequence, 62 residues long: Protein DsrB (62 aa).

It belongs to the DsrB family.

This Shigella flexneri serotype 5b (strain 8401) protein is Protein DsrB.